The following is a 254-amino-acid chain: Polysaccharide deacetylase domain-containing protein ECU11_0510 (254 aa).

The 185-residue stretch at 26 to 210 (GMIAINFVDG…IGKDKGYRFV (185 aa)) folds into the NodB homology domain.

The protein is Polysaccharide deacetylase domain-containing protein ECU11_0510 of Encephalitozoon cuniculi (strain GB-M1) (Microsporidian parasite).